The chain runs to 36 residues: Photosystem I reaction center subunit VIII (36 aa).

Residues 9–29 traverse the membrane as a helical segment; it reads IFVPLVGLVFPAVAMASLFLY.

It belongs to the PsaI family.

The protein localises to the plastid. Its subcellular location is the chloroplast thylakoid membrane. May help in the organization of the PsaL subunit. This is Photosystem I reaction center subunit VIII from Ostreococcus tauri.